The following is a 168-amino-acid chain: Thiol peroxidase (168 aa).

In terms of domain architecture, Thioredoxin spans Pro19–Ala168. Residue Cys61 is the Cysteine sulfenic acid (-SOH) intermediate of the active site. Cys61 and Cys95 are oxidised to a cystine.

It belongs to the peroxiredoxin family. Tpx subfamily. In terms of assembly, homodimer.

It catalyses the reaction a hydroperoxide + [thioredoxin]-dithiol = an alcohol + [thioredoxin]-disulfide + H2O. Thiol-specific peroxidase that catalyzes the reduction of hydrogen peroxide and organic hydroperoxides to water and alcohols, respectively. Plays a role in cell protection against oxidative stress by detoxifying peroxides. This is Thiol peroxidase from Shigella dysenteriae.